The following is a 353-amino-acid chain: Nicotinate-nucleotide--dimethylbenzimidazole phosphoribosyltransferase (353 aa).

The Proton acceptor role is filled by Glu319.

It belongs to the CobT family.

It catalyses the reaction 5,6-dimethylbenzimidazole + nicotinate beta-D-ribonucleotide = alpha-ribazole 5'-phosphate + nicotinate + H(+). Its pathway is nucleoside biosynthesis; alpha-ribazole biosynthesis; alpha-ribazole from 5,6-dimethylbenzimidazole: step 1/2. In terms of biological role, catalyzes the synthesis of alpha-ribazole-5'-phosphate from nicotinate mononucleotide (NAMN) and 5,6-dimethylbenzimidazole (DMB). This is Nicotinate-nucleotide--dimethylbenzimidazole phosphoribosyltransferase from Chlorobaculum tepidum (strain ATCC 49652 / DSM 12025 / NBRC 103806 / TLS) (Chlorobium tepidum).